The chain runs to 394 residues: Metal tolerance protein 11 (394 aa).

At 1–103 (MVEPASPDSD…EQDNLAKSET (103 aa)) the chain is on the cytoplasmic side. Residues 104–124 (LAIRISNIANMLLFAAKVYAS) traverse the membrane as a helical segment. Residues 125 to 130 (VTSGSL) are Vacuolar-facing. A helical transmembrane segment spans residues 131 to 151 (AIIASTLDSLLDLLSGFILWF). Topologically, residues 152-172 (TAFSMQTPNPYQYPIGKKRMQ) are cytoplasmic. A helical transmembrane segment spans residues 173-193 (PLGILVFASVMATLGLQIILE). Topologically, residues 194 to 212 (SLRTMLSSHKEFNLTKEQE) are vacuolar. A helical membrane pass occupies residues 213–233 (SWVVGIMLSVTLVKLLLVLYC). Topologically, residues 234–251 (RSFTNEIVKAYAQDHFFD) are cytoplasmic. The chain crosses the membrane as a helical span at residues 252–272 (VITNIIGLIAVILANYIDYWI). Position 273 (D273) is a topological domain, vacuolar. Residues 274-294 (PVGAIILALYTIRTWSMTVLE) form a helical membrane-spanning segment. The Cytoplasmic segment spans residues 295–394 (NVNSLVGKSA…HKPEHARSHC (100 aa)).

The protein belongs to the cation diffusion facilitator (CDF) transporter (TC 2.A.4) family. SLC30A subfamily. In terms of tissue distribution, widely expressed.

Its subcellular location is the prevacuolar compartment membrane. The protein resides in the golgi apparatus membrane. In terms of biological role, cation/proton antiporter involved in endogenous manganese tolerance probably through vesicular trafficking and exocytosis. The polypeptide is Metal tolerance protein 11 (MTP11) (Arabidopsis thaliana (Mouse-ear cress)).